The sequence spans 78 residues: UPF0154 protein lp_2061 (78 aa).

Residues 5–27 (TGIWILIVVIGVLVGLTGGFFGA) form a helical membrane-spanning segment.

The protein belongs to the UPF0154 family.

The protein resides in the membrane. This chain is UPF0154 protein lp_2061, found in Lactiplantibacillus plantarum (strain ATCC BAA-793 / NCIMB 8826 / WCFS1) (Lactobacillus plantarum).